Reading from the N-terminus, the 175-residue chain is Dual-action ribosomal maturation protein DarP (175 aa).

Belongs to the DarP family.

The protein resides in the cytoplasm. Its function is as follows. Member of a network of 50S ribosomal subunit biogenesis factors which assembles along the 30S-50S interface, preventing incorrect 23S rRNA structures from forming. Promotes peptidyl transferase center (PTC) maturation. The sequence is that of Dual-action ribosomal maturation protein DarP from Vibrio parahaemolyticus serotype O3:K6 (strain RIMD 2210633).